The sequence spans 1220 residues: Cullin-associated NEDD8-dissociated protein 1 (1220 aa).

HEAT repeat units follow at residues 1 to 35 (MEEG…DANH), 42 to 79 (ESFP…KIPQ), 121 to 157 (FYTS…SLEI), 259 to 295 (ADYT…YQQV), 365 to 410 (LSRL…HVPR), 615 to 650 (IFLR…SVTD), 680 to 700 (TTAY…YLAE), 701 to 737 (SLLE…SILL), 738 to 775 (KSKN…VISK), 810 to 847 (FQSK…DYGK), 850 to 887 (LPAN…QSEK), and 1020 to 1057 (EVSQ…KSSV).

It belongs to the CAND family.

Its subcellular location is the nucleus. Key assembly factor of SCF (SKP1-CUL1-F-box protein) E3 ubiquitin ligase complexes that promotes the exchange of the substrate-recognition F-box subunit in SCF complexes, thereby playing a key role in the cellular repertoire of SCF complexes. Acts as a F-box protein exchange factor. In Schizosaccharomyces pombe (strain 972 / ATCC 24843) (Fission yeast), this protein is Cullin-associated NEDD8-dissociated protein 1 (knd1).